We begin with the raw amino-acid sequence, 407 residues long: Proline-rich P65 protein (407 aa).

The segment at 1–50 (MDINKPGWNQSDQQATAYDPNQQQYYGDGSTYYDPDQAVDPNQAYYPDPN) is disordered. Residues 7 to 25 (GWNQSDQQATAYDPNQQQY) show a composition bias toward polar residues. 12 repeat units span residues 40–45 (DPNQAY), 75–80 (DPNQAY), 83–87 (DPNAY), 89–93 (DPNAY), 95–99 (DPNAY), 101–105 (DPNAY), 107–111 (DPNAY), 119–123 (DPNAY), 140–145 (DPNQAY), 150–154 (DPNAY), 156–160 (DPNAY), and 170–174 (DHNAY). The segment at 40–174 (DPNQAYYPDP…YVTSTDHNAY (135 aa)) is 12 X 5 AA repeats of D-P-N-Q-A-Y.

In terms of processing, the N-terminus is blocked.

Its subcellular location is the cell membrane. The sequence is that of Proline-rich P65 protein (p65) from Mycoplasmoides pneumoniae (strain ATCC 15531 / DSM 23978 / CIP 103766 / NBRC 14401 / NCTC 10119 / FH) (Mycoplasma pneumoniae).